A 661-amino-acid chain; its full sequence is Putative lipase ATG15 (661 aa).

At 1–3 the chain is on the cytoplasmic side; sequence MIW. A helical; Signal-anchor for type II membrane protein transmembrane segment spans residues 4–24; it reads NGRLVLACVLLIAGCSGQVDA. The Lumenal segment spans residues 25-661; the sequence is ARTREQRKAF…FDDFDPKNDL (637 aa). Asn-155, Asn-190, Asn-212, Asn-271, and Asn-295 each carry an N-linked (GlcNAc...) asparagine glycan. The active-site Charge relay system is Ser-311. The N-linked (GlcNAc...) asparagine glycan is linked to Asn-457. Disordered stretches follow at residues 492-559 and 574-597; these read ESTT…TSTS and TTTSATPKPSSTARTVTKTKTTTS. 3 stretches are compositionally biased toward low complexity: residues 493–513, 527–559, and 574–595; these read STTSAPTTSTSTSSSTSSTRT, TTTSSSSSISSPSATPAPTITTTSSLPTSTSTS, and TTTSATPKPSSTARTVTKTKTT.

This sequence belongs to the AB hydrolase superfamily. Lipase family. As to quaternary structure, binds to both phosphatidylinositol (PI) and phosphatidylinositol 3,5-bisphosphate (PIP2).

The protein localises to the endosome. Its subcellular location is the multivesicular body membrane. The protein resides in the prevacuolar compartment membrane. The catalysed reaction is a triacylglycerol + H2O = a diacylglycerol + a fatty acid + H(+). In terms of biological role, lipase which is essential for lysis of subvacuolar cytoplasm to vacuole targeted bodies and intravacuolar autophagic bodies. Involved in the lysis of intravacuolar multivesicular body (MVB) vesicles. The intravacuolar membrane disintegration by ATG15 is critical to life span extension. In Passalora fulva (Tomato leaf mold), this protein is Putative lipase ATG15 (ATG15).